The primary structure comprises 440 residues: Ribulose bisphosphate carboxylase large chain (440 aa).

Residue lysine 3 is modified to N6,N6,N6-trimethyllysine. 2 residues coordinate substrate: asparagine 112 and threonine 162. Residue lysine 164 is the Proton acceptor of the active site. Position 166 (lysine 166) interacts with substrate. Mg(2+) contacts are provided by lysine 190, aspartate 192, and glutamate 193. The residue at position 190 (lysine 190) is an N6-carboxylysine. The active-site Proton acceptor is histidine 283. Substrate is bound by residues arginine 284, histidine 316, and serine 368.

The protein belongs to the RuBisCO large chain family. Type I subfamily. In terms of assembly, heterohexadecamer of 8 large chains and 8 small chains; disulfide-linked. The disulfide link is formed within the large subunit homodimers. Mg(2+) is required as a cofactor. Post-translationally, the disulfide bond which can form in the large chain dimeric partners within the hexadecamer appears to be associated with oxidative stress and protein turnover.

The protein localises to the plastid. It localises to the chloroplast. It carries out the reaction 2 (2R)-3-phosphoglycerate + 2 H(+) = D-ribulose 1,5-bisphosphate + CO2 + H2O. It catalyses the reaction D-ribulose 1,5-bisphosphate + O2 = 2-phosphoglycolate + (2R)-3-phosphoglycerate + 2 H(+). Its function is as follows. RuBisCO catalyzes two reactions: the carboxylation of D-ribulose 1,5-bisphosphate, the primary event in carbon dioxide fixation, as well as the oxidative fragmentation of the pentose substrate in the photorespiration process. Both reactions occur simultaneously and in competition at the same active site. The chain is Ribulose bisphosphate carboxylase large chain from Bambusa multiplex (Hedge bamboo).